A 367-amino-acid chain; its full sequence is uncharacterized protein (367 aa).

To M.tuberculosis Rv0502.

This is an uncharacterized protein from Mycobacterium leprae (strain TN).